The chain runs to 55 residues: Spermatid nuclear transition protein 1 (55 aa).

Residues 1 to 42 (MSTSRKLKSHGMRRSKSRSPHKGVKRGGSKRKYRKGNLKSRK) show a composition bias toward basic residues. The disordered stretch occupies residues 1-55 (MSTSRKLKSHGMRRSKSRSPHKGVKRGGSKRKYRKGNLKSRKRGDDANRNYRSHL). Residues Ser9 and Ser40 each carry the phosphoserine modification.

This sequence belongs to the nuclear transition protein 1 family. As to expression, expressed by spermatids (at protein level).

The protein localises to the nucleus. It localises to the chromosome. In terms of biological role, plays a key role in the replacement of histones to protamine in the elongating spermatids of mammals. In condensing spermatids, loaded onto the nucleosomes, where it promotes the recruitment and processing of protamines, which are responsible for histone eviction. The chain is Spermatid nuclear transition protein 1 (TNP1) from Homo sapiens (Human).